A 329-amino-acid polypeptide reads, in one-letter code: Serine dehydratase-like (329 aa).

M1 is subject to N-acetylmethionine. Position 48 is an N6-(pyridoxal phosphate)lysine (K48).

Belongs to the serine/threonine dehydratase family. In terms of assembly, monomer. Homodimer. The cofactor is pyridoxal 5'-phosphate.

It catalyses the reaction L-serine = pyruvate + NH4(+). The catalysed reaction is L-threonine = 2-oxobutanoate + NH4(+). The enzyme catalyses L-glutamate = D-glutamate. Serine dehydratase activity is inhibited by manganese chloride, ferrous chloride, cobalt chloride, cupric chloride, nickel chloride and zinc chloride. Glutamate racemase activity is inhibited by manganese chloride, ferrous chloride, cupric chloride and zinc chloride. Catalyzes the pyridoxal-phosphate-dependent dehydrative deamination of L-threonine and L-serine to ammonia and alpha-ketobutyrate and pyruvate, respectively. Also exhibits racemase activity towards L-glutamate and D-glutamate. The polypeptide is Serine dehydratase-like (Sdsl) (Rattus norvegicus (Rat)).